The sequence spans 143 residues: Small ribosomal subunit protein eS12 (143 aa).

Belongs to the eukaryotic ribosomal protein eS12 family. As to quaternary structure, component of the small ribosomal subunit. Mature ribosomes consist of a small (40S) and a large (60S) subunit. The 40S subunit contains about 32 different proteins and 1 molecule of RNA (18S). The 60S subunit contains 45 different proteins and 3 molecules of RNA (25S, 5.8S and 5S).

It is found in the cytoplasm. In terms of biological role, component of the ribosome, a large ribonucleoprotein complex responsible for the synthesis of proteins in the cell. The small ribosomal subunit (SSU) binds messenger RNAs (mRNAs) and translates the encoded message by selecting cognate aminoacyl-transfer RNA (tRNA) molecules. The large subunit (LSU) contains the ribosomal catalytic site termed the peptidyl transferase center (PTC), which catalyzes the formation of peptide bonds, thereby polymerizing the amino acids delivered by tRNAs into a polypeptide chain. The nascent polypeptides leave the ribosome through a tunnel in the LSU and interact with protein factors that function in enzymatic processing, targeting, and the membrane insertion of nascent chains at the exit of the ribosomal tunnel. This Candida albicans (strain SC5314 / ATCC MYA-2876) (Yeast) protein is Small ribosomal subunit protein eS12 (RPS12).